The primary structure comprises 347 residues: tRNA N6-adenosine threonylcarbamoyltransferase (347 aa).

Residues H111 and H115 each coordinate Fe cation. Substrate-binding positions include 134–138 (LISGG), D167, G180, and N277. Fe cation is bound at residue D305.

Belongs to the KAE1 / TsaD family. Fe(2+) serves as cofactor.

It localises to the cytoplasm. The enzyme catalyses L-threonylcarbamoyladenylate + adenosine(37) in tRNA = N(6)-L-threonylcarbamoyladenosine(37) in tRNA + AMP + H(+). In terms of biological role, required for the formation of a threonylcarbamoyl group on adenosine at position 37 (t(6)A37) in tRNAs that read codons beginning with adenine. Is involved in the transfer of the threonylcarbamoyl moiety of threonylcarbamoyl-AMP (TC-AMP) to the N6 group of A37, together with TsaE and TsaB. TsaD likely plays a direct catalytic role in this reaction. This is tRNA N6-adenosine threonylcarbamoyltransferase from Actinobacillus pleuropneumoniae serotype 5b (strain L20).